The primary structure comprises 608 residues: Aspartate--tRNA(Asp/Asn) ligase (608 aa).

Glutamate 187 contributes to the L-aspartate binding site. An aspartate region spans residues 211 to 214; sequence QQFK. Residues arginine 233 and histidine 461 each coordinate L-aspartate. 233–235 is a binding site for ATP; the sequence is RDE. ATP is bound at residue glutamate 495. Residue arginine 502 coordinates L-aspartate. Position 547–550 (547–550) interacts with ATP; it reads GLDR.

Belongs to the class-II aminoacyl-tRNA synthetase family. Type 1 subfamily. Homodimer.

The protein resides in the cytoplasm. The catalysed reaction is tRNA(Asx) + L-aspartate + ATP = L-aspartyl-tRNA(Asx) + AMP + diphosphate. In terms of biological role, aspartyl-tRNA synthetase with relaxed tRNA specificity since it is able to aspartylate not only its cognate tRNA(Asp) but also tRNA(Asn). Reaction proceeds in two steps: L-aspartate is first activated by ATP to form Asp-AMP and then transferred to the acceptor end of tRNA(Asp/Asn). The protein is Aspartate--tRNA(Asp/Asn) ligase of Prosthecochloris aestuarii (strain DSM 271 / SK 413).